A 626-amino-acid polypeptide reads, in one-letter code: 1-deoxy-D-xylulose-5-phosphate synthase 2 (626 aa).

Thiamine diphosphate contacts are provided by residues His-74 and Gly-115–Ala-117. Asp-146 serves as a coordination point for Mg(2+). Thiamine diphosphate contacts are provided by residues Gly-147 to Ser-148, Asn-175, Phe-286, and Glu-368. Asn-175 is a binding site for Mg(2+).

It belongs to the transketolase family. DXPS subfamily. Homodimer. Mg(2+) is required as a cofactor. It depends on thiamine diphosphate as a cofactor.

The catalysed reaction is D-glyceraldehyde 3-phosphate + pyruvate + H(+) = 1-deoxy-D-xylulose 5-phosphate + CO2. It participates in metabolic intermediate biosynthesis; 1-deoxy-D-xylulose 5-phosphate biosynthesis; 1-deoxy-D-xylulose 5-phosphate from D-glyceraldehyde 3-phosphate and pyruvate: step 1/1. In terms of biological role, catalyzes the acyloin condensation reaction between C atoms 2 and 3 of pyruvate and glyceraldehyde 3-phosphate to yield 1-deoxy-D-xylulose-5-phosphate (DXP). The polypeptide is 1-deoxy-D-xylulose-5-phosphate synthase 2 (Geobacter sulfurreducens (strain ATCC 51573 / DSM 12127 / PCA)).